A 159-amino-acid polypeptide reads, in one-letter code: S-ribosylhomocysteine lyase (159 aa).

Positions 53, 57, and 124 each coordinate Fe cation.

It belongs to the LuxS family. Homodimer. Requires Fe cation as cofactor.

The enzyme catalyses S-(5-deoxy-D-ribos-5-yl)-L-homocysteine = (S)-4,5-dihydroxypentane-2,3-dione + L-homocysteine. Functionally, involved in the synthesis of autoinducer 2 (AI-2) which is secreted by bacteria and is used to communicate both the cell density and the metabolic potential of the environment. The regulation of gene expression in response to changes in cell density is called quorum sensing. Catalyzes the transformation of S-ribosylhomocysteine (RHC) to homocysteine (HC) and 4,5-dihydroxy-2,3-pentadione (DPD). The polypeptide is S-ribosylhomocysteine lyase (Clostridium beijerinckii (strain ATCC 51743 / NCIMB 8052) (Clostridium acetobutylicum)).